Consider the following 338-residue polypeptide: Tetraacyldisaccharide 4'-kinase (338 aa).

53 to 60 lines the ATP pocket; the sequence is TVGGSGKT.

This sequence belongs to the LpxK family.

It carries out the reaction a lipid A disaccharide + ATP = a lipid IVA + ADP + H(+). It participates in glycolipid biosynthesis; lipid IV(A) biosynthesis; lipid IV(A) from (3R)-3-hydroxytetradecanoyl-[acyl-carrier-protein] and UDP-N-acetyl-alpha-D-glucosamine: step 6/6. Its function is as follows. Transfers the gamma-phosphate of ATP to the 4'-position of a tetraacyldisaccharide 1-phosphate intermediate (termed DS-1-P) to form tetraacyldisaccharide 1,4'-bis-phosphate (lipid IVA). The sequence is that of Tetraacyldisaccharide 4'-kinase from Azorhizobium caulinodans (strain ATCC 43989 / DSM 5975 / JCM 20966 / LMG 6465 / NBRC 14845 / NCIMB 13405 / ORS 571).